A 207-amino-acid chain; its full sequence is Large ribosomal subunit protein uL4 (207 aa).

Residues 44–76 (RRQGTQSTKTKSEVRGGGKKPWRQKGTGRARQG) form a disordered region. Residues 60–71 (GGKKPWRQKGTG) are compositionally biased toward basic residues.

Belongs to the universal ribosomal protein uL4 family. In terms of assembly, part of the 50S ribosomal subunit.

Its function is as follows. One of the primary rRNA binding proteins, this protein initially binds near the 5'-end of the 23S rRNA. It is important during the early stages of 50S assembly. It makes multiple contacts with different domains of the 23S rRNA in the assembled 50S subunit and ribosome. In terms of biological role, forms part of the polypeptide exit tunnel. The protein is Large ribosomal subunit protein uL4 of Ruminiclostridium cellulolyticum (strain ATCC 35319 / DSM 5812 / JCM 6584 / H10) (Clostridium cellulolyticum).